Reading from the N-terminus, the 309-residue chain is tRNA uridine(34) hydroxylase (309 aa).

In terms of domain architecture, Rhodanese spans 137–232; the sequence is RGDEVVFFDG…YGEKYGDKGL (96 aa). Cys192 acts as the Cysteine persulfide intermediate in catalysis.

Belongs to the TrhO family.

The catalysed reaction is uridine(34) in tRNA + AH2 + O2 = 5-hydroxyuridine(34) in tRNA + A + H2O. Its function is as follows. Catalyzes oxygen-dependent 5-hydroxyuridine (ho5U) modification at position 34 in tRNAs. This Corynebacterium jeikeium (strain K411) protein is tRNA uridine(34) hydroxylase.